The following is a 232-amino-acid chain: Ribonuclease 3 (232 aa).

The RNase III domain maps to 5 to 134 (QTVLKNHFAI…FLGALLLDKD (130 aa)). Glu-47 serves as a coordination point for Mg(2+). Residue Asp-51 is part of the active site. Residues Asp-120 and Glu-123 each contribute to the Mg(2+) site. Glu-123 is an active-site residue. The 70-residue stretch at 160–229 (DYKTHLQELL…AKNAVEKGLD (70 aa)) folds into the DRBM domain.

Belongs to the ribonuclease III family. As to quaternary structure, homodimer. Requires Mg(2+) as cofactor.

It localises to the cytoplasm. The catalysed reaction is Endonucleolytic cleavage to 5'-phosphomonoester.. In terms of biological role, digests double-stranded RNA. Involved in the processing of primary rRNA transcript to yield the immediate precursors to the large and small rRNAs (23S and 16S). Processes some mRNAs, and tRNAs when they are encoded in the rRNA operon. Processes pre-crRNA and tracrRNA of type II CRISPR loci if present in the organism. This is Ribonuclease 3 from Streptococcus pneumoniae (strain Taiwan19F-14).